We begin with the raw amino-acid sequence, 727 residues long: E3 SUMO-protein ligase pli1 (727 aa).

The 35-residue stretch at 18–52 (ETGLIIPQLKDILRVFGLRLSGTKAELITRIKQLI) folds into the SAP domain. The PINIT domain occupies 108-261 (YSRPFAPVVH…SVVVCFVKVY (154 aa)). The SP-RING-type zinc finger occupies 290–371 (QDADIIATST…MQHILESTPS (82 aa)). Positions 321, 323, 344, and 347 each coordinate Zn(2+). A phosphoserine mark is found at Ser395 and Ser396. 2 disordered regions span residues 408 to 558 (ELSD…TQHS) and 706 to 727 (QSNNSYHNSGFEGTGNTFQSID). 2 stretches are compositionally biased toward polar residues: residues 417-435 (TMANKSNDQPTRRASTHNS) and 459-494 (VATSTTESPSNATKENSLSRNVQSPNIDTAISNRST). Residues 546-558 (SQQNNNNSNTQHS) are compositionally biased toward low complexity.

Belongs to the PIAS family. In terms of assembly, interacts with hus5/ubc9.

Its subcellular location is the nucleus. Its pathway is protein modification; protein sumoylation. In terms of biological role, acts as an E3 ligase mediating SUMO/Smt3 attachment to other proteins. Involved in the maintenance of the centromere and in telomere length. Regulates recombination, via extension sumoylation, particularly within the heterochromatin repeats. This Schizosaccharomyces pombe (strain 972 / ATCC 24843) (Fission yeast) protein is E3 SUMO-protein ligase pli1 (pli1).